The following is a 365-amino-acid chain: DNA polymerase IV (365 aa).

The 185-residue stretch at 14-198 (IIHIDMDAFF…LPIEKFHGVG (185 aa)) folds into the UmuC domain. Mg(2+)-binding residues include Asp-18 and Asp-116. Glu-117 is an active-site residue.

This sequence belongs to the DNA polymerase type-Y family. As to quaternary structure, monomer. Mg(2+) is required as a cofactor.

Its subcellular location is the cytoplasm. The enzyme catalyses DNA(n) + a 2'-deoxyribonucleoside 5'-triphosphate = DNA(n+1) + diphosphate. Functionally, poorly processive, error-prone DNA polymerase involved in untargeted mutagenesis. Copies undamaged DNA at stalled replication forks, which arise in vivo from mismatched or misaligned primer ends. These misaligned primers can be extended by PolIV. Exhibits no 3'-5' exonuclease (proofreading) activity. May be involved in translesional synthesis, in conjunction with the beta clamp from PolIII. The sequence is that of DNA polymerase IV from Streptococcus pyogenes serotype M3 (strain ATCC BAA-595 / MGAS315).